A 55-amino-acid polypeptide reads, in one-letter code: Glycine-rich antimicrobial peptide Pg-AMP (55 aa).

Positions 18–39 (GYGGYGGGRYGGGYGSGRGQPV) are enriched in gly residues. Residues 18 to 55 (GYGGYGGGRYGGGYGSGRGQPVGQGVERSHDDNRNQPR) are disordered. Positions 44 to 55 (ERSHDDNRNQPR) are enriched in basic and acidic residues.

As to quaternary structure, monomer and homodimer. Might act by homodimer formation.

Functionally, has antibacterial activity against the Gram-negative bacteria Klebsiella sp., Proteus sp., E.coli ATCC 8739 (MIC=72 ug/ml) and K.pneumoniae (MIC=32 ug/ml). Has no activity against the Gram-negative bacterium S.typhimurium or the Gram-positive bacterium S.aureus. Does not have antifungal activity against the human and plant pathogenic fungi F.oxysporum, A.fumigatus and R.solani. The chain is Glycine-rich antimicrobial peptide Pg-AMP from Psidium guajava (Guava).